A 476-amino-acid polypeptide reads, in one-letter code: Aspartyl/glutamyl-tRNA(Asn/Gln) amidotransferase subunit B (476 aa).

The protein belongs to the GatB/GatE family. GatB subfamily. In terms of assembly, heterotrimer of A, B and C subunits.

The catalysed reaction is L-glutamyl-tRNA(Gln) + L-glutamine + ATP + H2O = L-glutaminyl-tRNA(Gln) + L-glutamate + ADP + phosphate + H(+). It carries out the reaction L-aspartyl-tRNA(Asn) + L-glutamine + ATP + H2O = L-asparaginyl-tRNA(Asn) + L-glutamate + ADP + phosphate + 2 H(+). Functionally, allows the formation of correctly charged Asn-tRNA(Asn) or Gln-tRNA(Gln) through the transamidation of misacylated Asp-tRNA(Asn) or Glu-tRNA(Gln) in organisms which lack either or both of asparaginyl-tRNA or glutaminyl-tRNA synthetases. The reaction takes place in the presence of glutamine and ATP through an activated phospho-Asp-tRNA(Asn) or phospho-Glu-tRNA(Gln). In Thermosipho melanesiensis (strain DSM 12029 / CIP 104789 / BI429), this protein is Aspartyl/glutamyl-tRNA(Asn/Gln) amidotransferase subunit B.